Here is a 221-residue protein sequence, read N- to C-terminus: DNA mismatch repair protein MutH (221 aa).

This sequence belongs to the MutH family.

Its subcellular location is the cytoplasm. Its function is as follows. Sequence-specific endonuclease that cleaves unmethylated GATC sequences. It is involved in DNA mismatch repair. The polypeptide is DNA mismatch repair protein MutH (Vibrio cholerae serotype O1 (strain ATCC 39315 / El Tor Inaba N16961)).